We begin with the raw amino-acid sequence, 202 residues long: MNLLHLDSSILGDHSASRQLTHEVVQAYQRSHADSQVTYRDLASEALGHFSAASLAAAGTPVEARDASQQQEVDTNEATLQQFLAAEVLVIGAPMYNFTIPSQLKAWFDRIMVAGRTFRYSEAGPEGLCGGKKVIIVSTSGGLHVGQPTGAGHEELLKALFAFIGITDLQFVRAHGLAYGEEPRANAMTAAQQHIESELFAA.

Residues S9, 15 to 17, 95 to 98, and 139 to 142 each bind FMN; these read SAS, MYNF, and TSGG.

It belongs to the azoreductase type 1 family. As to quaternary structure, homodimer. FMN is required as a cofactor.

It catalyses the reaction 2 a quinone + NADH + H(+) = 2 a 1,4-benzosemiquinone + NAD(+). It carries out the reaction N,N-dimethyl-1,4-phenylenediamine + anthranilate + 2 NAD(+) = 2-(4-dimethylaminophenyl)diazenylbenzoate + 2 NADH + 2 H(+). Its function is as follows. Quinone reductase that provides resistance to thiol-specific stress caused by electrophilic quinones. Functionally, also exhibits azoreductase activity. Catalyzes the reductive cleavage of the azo bond in aromatic azo compounds to the corresponding amines. The sequence is that of FMN-dependent NADH:quinone oxidoreductase from Pseudomonas savastanoi pv. phaseolicola (strain 1448A / Race 6) (Pseudomonas syringae pv. phaseolicola (strain 1448A / Race 6)).